The chain runs to 64 residues: DNA-directed RNA polymerase subunit Rpo10 (64 aa).

Residues cysteine 7, cysteine 10, cysteine 45, and cysteine 46 each coordinate Zn(2+).

The protein belongs to the archaeal Rpo10/eukaryotic RPB10 RNA polymerase subunit family. In terms of assembly, part of the RNA polymerase complex. Requires Zn(2+) as cofactor.

It is found in the cytoplasm. It catalyses the reaction RNA(n) + a ribonucleoside 5'-triphosphate = RNA(n+1) + diphosphate. DNA-dependent RNA polymerase (RNAP) catalyzes the transcription of DNA into RNA using the four ribonucleoside triphosphates as substrates. The protein is DNA-directed RNA polymerase subunit Rpo10 of Natronomonas pharaonis (strain ATCC 35678 / DSM 2160 / CIP 103997 / JCM 8858 / NBRC 14720 / NCIMB 2260 / Gabara) (Halobacterium pharaonis).